Here is a 198-residue protein sequence, read N- to C-terminus: MGPEAFLPVALIIGYLFGSIPFGLILTKLAGTQDLRSIGSGNIGATNVLRTGRKGLAAGTLLGDALKGTAAVIISGYLGGPNAAMIAGLGAFLGHLFPVWLKFRGGKGVAVYIGILIGLFWPGAIFFCLVWLATAFAFRYSSVAALVASVLTPIVLWAFGHTALAALFALLTLLLIYMHRENIRRLQAGTEGKIGAKK.

The next 5 membrane-spanning stretches (helical) occupy residues 6 to 26 (FLPV…GLIL), 55 to 75 (GLAA…VIIS), 83 to 103 (AAMI…WLKF), 113 to 133 (IGIL…VWLA), and 154 to 174 (IVLW…LTLL).

This sequence belongs to the PlsY family. In terms of assembly, probably interacts with PlsX.

Its subcellular location is the cell inner membrane. It carries out the reaction an acyl phosphate + sn-glycerol 3-phosphate = a 1-acyl-sn-glycero-3-phosphate + phosphate. It functions in the pathway lipid metabolism; phospholipid metabolism. In terms of biological role, catalyzes the transfer of an acyl group from acyl-phosphate (acyl-PO(4)) to glycerol-3-phosphate (G3P) to form lysophosphatidic acid (LPA). This enzyme utilizes acyl-phosphate as fatty acyl donor, but not acyl-CoA or acyl-ACP. This is Glycerol-3-phosphate acyltransferase from Bradyrhizobium sp. (strain BTAi1 / ATCC BAA-1182).